Consider the following 689-residue polypeptide: DNA ligase (689 aa).

NAD(+) contacts are provided by residues 51-55 (DSEYD), 100-101 (SL), and glutamate 129. Lysine 131 acts as the N6-AMP-lysine intermediate in catalysis. Residues arginine 152, glutamate 189, lysine 308, and lysine 332 each coordinate NAD(+). Zn(2+) is bound by residues cysteine 426, cysteine 429, cysteine 444, and cysteine 450. The BRCT domain occupies 609–689 (ADEQPLKGQT…ELLALLAANS (81 aa)).

Belongs to the NAD-dependent DNA ligase family. LigA subfamily. Mg(2+) serves as cofactor. It depends on Mn(2+) as a cofactor.

It catalyses the reaction NAD(+) + (deoxyribonucleotide)n-3'-hydroxyl + 5'-phospho-(deoxyribonucleotide)m = (deoxyribonucleotide)n+m + AMP + beta-nicotinamide D-nucleotide.. In terms of biological role, DNA ligase that catalyzes the formation of phosphodiester linkages between 5'-phosphoryl and 3'-hydroxyl groups in double-stranded DNA using NAD as a coenzyme and as the energy source for the reaction. It is essential for DNA replication and repair of damaged DNA. This is DNA ligase from Shewanella sp. (strain ANA-3).